The following is a 379-amino-acid chain: Cytochrome b (379 aa).

A run of 4 helical transmembrane segments spans residues 33–53 (FGSLLGMCLVIQILTGLFLAM), 77–98 (WLIRYLHANGASMFFICLFIHV), 113–133 (WNIGIILFLTTMATAFVGYVL), and 178–198 (FFAFHFILPFIIAAFALVHLL). Heme b contacts are provided by His-83 and His-97. Heme b contacts are provided by His-182 and His-196. An a ubiquinone-binding site is contributed by His-201. 4 helical membrane passes run 226–246 (TKDLLGIFLLLLVLMILALFF), 288–308 (LGGVLALVLSILILAAFPLLN), 320–340 (VTQIIYWIFIANLLVLTWIGG), and 347–367 (FTTIGQIASITYFTIIIILIP).

The protein belongs to the cytochrome b family. The cytochrome bc1 complex contains 11 subunits: 3 respiratory subunits (MT-CYB, CYC1 and UQCRFS1), 2 core proteins (UQCRC1 and UQCRC2) and 6 low-molecular weight proteins (UQCRH/QCR6, UQCRB/QCR7, UQCRQ/QCR8, UQCR10/QCR9, UQCR11/QCR10 and a cleavage product of UQCRFS1). This cytochrome bc1 complex then forms a dimer. Heme b is required as a cofactor.

It is found in the mitochondrion inner membrane. Functionally, component of the ubiquinol-cytochrome c reductase complex (complex III or cytochrome b-c1 complex) that is part of the mitochondrial respiratory chain. The b-c1 complex mediates electron transfer from ubiquinol to cytochrome c. Contributes to the generation of a proton gradient across the mitochondrial membrane that is then used for ATP synthesis. In Akodon reigi (Reig's grass mouse), this protein is Cytochrome b (MT-CYB).